The following is a 59-amino-acid chain: UPF0391 membrane protein Geob_0344 (59 aa).

The next 2 helical transmembrane spans lie at 4-24 (WAAI…TGIA) and 33-53 (FLFI…ITAG).

It belongs to the UPF0391 family.

The protein localises to the cell membrane. The polypeptide is UPF0391 membrane protein Geob_0344 (Geotalea daltonii (strain DSM 22248 / JCM 15807 / FRC-32) (Geobacter daltonii)).